Here is a 258-residue protein sequence, read N- to C-terminus: 5'-nucleotidase SurE (258 aa).

4 residues coordinate a divalent metal cation: Asp-9, Asp-10, Ser-42, and Asn-95.

This sequence belongs to the SurE nucleotidase family. Requires a divalent metal cation as cofactor.

The protein resides in the cytoplasm. The catalysed reaction is a ribonucleoside 5'-phosphate + H2O = a ribonucleoside + phosphate. Functionally, nucleotidase that shows phosphatase activity on nucleoside 5'-monophosphates. The protein is 5'-nucleotidase SurE of Campylobacter concisus (strain 13826).